A 264-amino-acid polypeptide reads, in one-letter code: Myozenin-2 (264 aa).

Residue R53 is modified to Omega-N-methylarginine. The tract at residues 90-135 is disordered; that stretch reads GKVDGSNLEGGSQQAPLTPPNTPDPRSPPNPDNIAPGYSGPLKEIP. S101 is modified (phosphoserine). Residues 106 to 120 show a composition bias toward pro residues; that stretch reads LTPPNTPDPRSPPNP. Phosphothreonine occurs at positions 107 and 111. At S116 the chain carries Phosphoserine.

Belongs to the myozenin family. Interacts via its C-terminus with spectrin repeats 3 and 4 of ACTN2. Interacts with ACTN1, LDB3, MYOT and PPP3CA.

Its subcellular location is the cytoplasm. It localises to the myofibril. The protein localises to the sarcomere. The protein resides in the z line. In terms of biological role, myozenins may serve as intracellular binding proteins involved in linking Z line proteins such as alpha-actinin, gamma-filamin, TCAP/telethonin, LDB3/ZASP and localizing calcineurin signaling to the sarcomere. Plays an important role in the modulation of calcineurin signaling. May play a role in myofibrillogenesis. This Pongo abelii (Sumatran orangutan) protein is Myozenin-2 (MYOZ2).